The sequence spans 329 residues: Putative ubiquitin thioesterase otu1 (329 aa).

Positions 7–89 (RLKYENQSAV…ATSFSTNEPA (83 aa)) are UBX-like. The interval 85–127 (TNEPAKPPIPNAATKPTFPPQTEISNPPAVSHQSKNTSQDPPY) is disordered. Positions 115–124 (SHQSKNTSQD) are enriched in polar residues. The OTU domain maps to 135–254 (IALRVMPDDN…GIHYDLAALA (120 aa)). Positions 140 to 146 (MPDDNSC) are cys-loop. The active site involves Asp143. Cys146 acts as the Nucleophile in catalysis. Residues 193–203 (IRKETSWGGYI) are variable-loop. Positions 243–247 (YSGIH) are his-loop. Ile246 provides a ligand contact to substrate. The active site involves His247. Positions 272–277 (VTITPY) are S2 site. The segment at 299-323 (IRCTICGTGLVGEKDATAHALATGH) adopts a C2H2-type zinc-finger fold. His323 is an active-site residue.

The protein localises to the cytoplasm. It localises to the nucleus. The enzyme catalyses Thiol-dependent hydrolysis of ester, thioester, amide, peptide and isopeptide bonds formed by the C-terminal Gly of ubiquitin (a 76-residue protein attached to proteins as an intracellular targeting signal).. In terms of biological role, hydrolase that can remove conjugated ubiquitin from proteins and may therefore play an important regulatory role at the level of protein turnover by preventing degradation. Has a role in meiosis. This chain is Putative ubiquitin thioesterase otu1 (otu1), found in Schizosaccharomyces pombe (strain 972 / ATCC 24843) (Fission yeast).